The following is a 541-amino-acid chain: Chaperonin GroEL (541 aa).

Residues T29–P32, D86–T90, G413, D477–L479, and D493 each bind ATP.

It belongs to the chaperonin (HSP60) family. Forms a cylinder of 14 subunits composed of two heptameric rings stacked back-to-back. Interacts with the co-chaperonin GroES.

It is found in the cytoplasm. It catalyses the reaction ATP + H2O + a folded polypeptide = ADP + phosphate + an unfolded polypeptide.. Functionally, together with its co-chaperonin GroES, plays an essential role in assisting protein folding. The GroEL-GroES system forms a nano-cage that allows encapsulation of the non-native substrate proteins and provides a physical environment optimized to promote and accelerate protein folding. In Clostridium beijerinckii (strain ATCC 51743 / NCIMB 8052) (Clostridium acetobutylicum), this protein is Chaperonin GroEL.